A 556-amino-acid polypeptide reads, in one-letter code: MQRFCVCSPSSYRLNPITSMATGSGSLIWFRKGLRVHDNPALEYASKGSEFMYPVFVIDPHYMESDPSAFSPGSSRAGVNRIRFLLESLKDLDSSLKKLGSRLLVFKGEPGEVLVRCLQEWKVKRLCFEYDTDPYYQALDVKVKDYASSTGVEVFSPVSHTLFNPAHIIEKNGGKPPLSYQSFLKVAGEPSCAKSELVMSYSSLPPIGDIGNLGISEVPSLEELGYKDDEQADWTPFRGGESEALKRLTKSISDKAWVANFEKPKGDPSAFLKPATTVMSPYLKFGCLSSRYFYQCLQNIYKDVKKHTSPPVSLLGQLLWREFFYTTAFGTPNFDKMKGNRICKQIPWNEDHAMLAAWRDGKTGYPWIDAIMVQLLKWGWMHHLARHCVACFLTRGDLFIHWEQGRDVFERLLIDSDWAINNGNWMWLSCSSFFYQFNRIYSPISFGKKYDPDGKYIRHFLPVLKDMPKQYIYEPWTAPLSVQTKANCIVGKDYPKPMVLHDSASKECKRKMGEAYALNKKMDGKVDEENLRDLRRKLQKDEHEESKIRNQRPKLK.

Residues 24-162 (SGSLIWFRKG…EVFSPVSHTL (139 aa)) enclose the Photolyase/cryptochrome alpha/beta domain. Glu-262 contacts phosphate. Residues Lys-263, 276 to 280 (TTVMS), 317 to 321 (QLLWR), 380 to 383 (WMHH), Arg-386, 415 to 417 (DSD), and Asn-421 contribute to the FAD site. Trp-320 lines the DNA pocket. An interaction with DNA region spans residues 382–387 (HHLARH). Residue Trp-427 coordinates DNA. The interval 534–556 (LRRKLQKDEHEESKIRNQRPKLK) is disordered. Residues 539 to 548 (QKDEHEESKI) are compositionally biased toward basic and acidic residues.

It belongs to the DNA photolyase class-1 family. The cofactor is FAD. As to expression, expressed in siliques, flowers and leaves. Not detected in roots.

The catalysed reaction is (6-4) photoproduct (in DNA) = 2 pyrimidine residues (in DNA).. Its function is as follows. Involved in repair of UV radiation-induced DNA damage. Catalyzes the photoreactivation of pyrimidine [6-4] pyrimidone photoproduct (6-4 products). Binds specifically to DNA containing 6-4 products and repairs these lesions in a visible light-dependent manner. Not required for repair of cyclobutane pyrimidine dimer (CPD). The protein is (6-4)DNA photolyase (UVR3) of Arabidopsis thaliana (Mouse-ear cress).